Here is a 287-residue protein sequence, read N- to C-terminus: Nucleotide-binding protein VP2673 (287 aa).

8-15 (GHSGAGKS) contributes to the ATP binding site. 56-59 (DIRN) provides a ligand contact to GTP.

This sequence belongs to the RapZ-like family.

Displays ATPase and GTPase activities. The polypeptide is Nucleotide-binding protein VP2673 (Vibrio parahaemolyticus serotype O3:K6 (strain RIMD 2210633)).